Reading from the N-terminus, the 244-residue chain is Phosphate propanoyltransferase (244 aa).

Residue 52–54 (ISA) coordinates CoA. The Zn(2+) site is built by His56 and His58. A CoA-binding site is contributed by Arg106. Arg112 contacts phosphate. 4 residues coordinate Zn(2+): Glu118, His166, His168, and His214. Asn221 provides a ligand contact to CoA.

Belongs to the PduL family. As to quaternary structure, full-length protein forms large oligomers. Possible homotrimer and monomer, when purified in the absence of the encapsulation peptide (EP, residues 1-20). The EP may influence oligomerization. Zn(2+) serves as cofactor.

It localises to the bacterial microcompartment. It catalyses the reaction propanoyl-CoA + phosphate = propanoyl phosphate + CoA. Part of a bacterial microcompartment (BMC) locus required for growth on plant and algal sugars, including L-fucose and L-rhamnose. Thought to be active on lactyl-CoA in a lactaldehyde-degradation pathway. CoA is regenerated within the BMC via this enzyme, although there must also be cofactor transport across the BMC. Directly targeted to the BMC. The sequence is that of Phosphate propanoyltransferase from Planctopirus limnophila (strain ATCC 43296 / DSM 3776 / IFAM 1008 / Mu 290) (Planctomyces limnophilus).